The chain runs to 255 residues: tRNA pseudouridine synthase A (255 aa).

Catalysis depends on aspartate 52, which acts as the Nucleophile. Residue tyrosine 111 coordinates substrate.

Belongs to the tRNA pseudouridine synthase TruA family. Homodimer.

The enzyme catalyses uridine(38/39/40) in tRNA = pseudouridine(38/39/40) in tRNA. Its function is as follows. Formation of pseudouridine at positions 38, 39 and 40 in the anticodon stem and loop of transfer RNAs. This is tRNA pseudouridine synthase A from Cereibacter sphaeroides (strain ATCC 17029 / ATH 2.4.9) (Rhodobacter sphaeroides).